The chain runs to 375 residues: Neuropeptide Y receptor type 4-2 (375 aa).

Residues 1-39 lie on the Extracellular side of the membrane; it reads MNTSHLLALLLPKSPQGENRSKPLGTPYNFSEHCQDSVD. Residues asparagine 2, asparagine 19, and asparagine 29 are each glycosylated (N-linked (GlcNAc...) asparagine). Residues 40 to 60 form a helical membrane-spanning segment; the sequence is VMVFIVTSYSIETVVGVLGNL. At 61–87 the chain is on the cytoplasmic side; that stretch reads CLMCVTVRQKEKANVTNLLIANLAFSD. A helical transmembrane segment spans residues 88 to 108; that stretch reads FLMCLLCQPLTAVYTIMDYWI. The Extracellular portion of the chain corresponds to 109–116; it reads FGETLCKM. Cysteine 114 and cysteine 201 are joined by a disulfide. A helical transmembrane segment spans residues 117–137; sequence SAFIQCMSVTVSILSLVLVAL. Over 138 to 155 the chain is Cytoplasmic; the sequence is ERHQLIINPTGWKPSISQ. A helical membrane pass occupies residues 156–176; that stretch reads AYLGIVLIWVIACVLSLPFLA. The Extracellular segment spans residues 177–212; the sequence is NSILENVFHKNHSKALEFLADKVVCTESWPLAHHRT. Asparagine 187 is a glycosylation site (N-linked (GlcNAc...) asparagine). Residues 213–233 traverse the membrane as a helical segment; it reads IYTTFLLLFQYCLPLGFILVC. Residues 234–263 lie on the Cytoplasmic side of the membrane; it reads YARIYRRLQRQGRVFHKGTYSLRAGHMKQV. Residues 264-284 traverse the membrane as a helical segment; sequence NVVLVVMVVAFAVLWLPLHVF. Topologically, residues 285 to 301 are extracellular; it reads NSLEDWHHEAIPICHGN. Residues 302 to 322 form a helical membrane-spanning segment; that stretch reads LIFLVCHLLAMASTCVNPFIY. Over 323–375 the chain is Cytoplasmic; the sequence is GFLNTNFKKEIKALVLTCQQSAPLEESEHLPLSTVHTEVSKGSLRLSGRSNPI. A lipid anchor (S-palmitoyl cysteine) is attached at cysteine 340.

Belongs to the G-protein coupled receptor 1 family.

Its subcellular location is the cell membrane. Functionally, g protein-coupled receptor for PPY/pancreatic polypeptide/PP, NPY/neuropeptide Y and PYY/peptide YY that is negatively coupled to cAMP. The rank order of affinity for these polypeptides and their derivatives is PP, PP (2-36) and [Ile-31, Gln-34] PP &gt; [Pro-34] PYY &gt; PYY and [Leu-31, Pro-34] NPY &gt; NPY &gt; PYY (3-36) and NPY (2-36) &gt; PP (13-36) &gt; PP (31-36) &gt; NPY free acid. The sequence is that of Neuropeptide Y receptor type 4-2 from Homo sapiens (Human).